A 156-amino-acid chain; its full sequence is N-glycosidase Npun_R5314 (156 aa).

It belongs to the YbiA family.

The enzyme catalyses 2,5-diamino-6-hydroxy-4-(5-phosphoribosylamino)-pyrimidine + H2O = 2,5,6-triamino-4-hydroxypyrimidine + D-ribose 5-phosphate. It catalyses the reaction 5-amino-6-(5-phospho-D-ribosylamino)uracil + H2O = 5,6-diaminouracil + D-ribose 5-phosphate. In terms of biological role, catalyzes the hydrolysis of the N-glycosidic bond in the first two intermediates of riboflavin biosynthesis, which are highly reactive metabolites, yielding relatively innocuous products. Thus, can divert a surplus of harmful intermediates into relatively harmless products and pre-empt the damage these intermediates would otherwise do. May act on other substrates in vivo. Has no activity against GTP, nucleoside monophosphates or ADP-ribose. The polypeptide is N-glycosidase Npun_R5314 (Nostoc punctiforme (strain ATCC 29133 / PCC 73102)).